A 124-amino-acid polypeptide reads, in one-letter code: Fluoride-specific ion channel FluC (124 aa).

The next 4 membrane-spanning stretches (helical) occupy residues V5–V25, S32–M52, F67–T87, and L96–I116. Residues G75 and T78 each contribute to the Na(+) site.

It belongs to the fluoride channel Fluc/FEX (TC 1.A.43) family.

It is found in the cell inner membrane. The enzyme catalyses fluoride(in) = fluoride(out). Na(+) is not transported, but it plays an essential structural role and its presence is essential for fluoride channel function. Fluoride-specific ion channel. Important for reducing fluoride concentration in the cell, thus reducing its toxicity. This is Fluoride-specific ion channel FluC from Geobacter sp. (strain M21).